The following is a 188-amino-acid chain: Elongation factor P (188 aa).

The protein belongs to the elongation factor P family.

Its subcellular location is the cytoplasm. The protein operates within protein biosynthesis; polypeptide chain elongation. In terms of biological role, involved in peptide bond synthesis. Stimulates efficient translation and peptide-bond synthesis on native or reconstituted 70S ribosomes in vitro. Probably functions indirectly by altering the affinity of the ribosome for aminoacyl-tRNA, thus increasing their reactivity as acceptors for peptidyl transferase. The protein is Elongation factor P of Bdellovibrio bacteriovorus (strain ATCC 15356 / DSM 50701 / NCIMB 9529 / HD100).